The following is a 136-amino-acid chain: Large ribosomal subunit protein uL16 (136 aa).

This sequence belongs to the universal ribosomal protein uL16 family. Part of the 50S ribosomal subunit.

In terms of biological role, binds 23S rRNA and is also seen to make contacts with the A and possibly P site tRNAs. In Buchnera aphidicola subsp. Acyrthosiphon pisum (strain 5A), this protein is Large ribosomal subunit protein uL16.